A 102-amino-acid chain; its full sequence is Large ribosomal subunit protein uL24 (102 aa).

This sequence belongs to the universal ribosomal protein uL24 family. In terms of assembly, part of the 50S ribosomal subunit.

Functionally, one of two assembly initiator proteins, it binds directly to the 5'-end of the 23S rRNA, where it nucleates assembly of the 50S subunit. Its function is as follows. One of the proteins that surrounds the polypeptide exit tunnel on the outside of the subunit. This is Large ribosomal subunit protein uL24 from Ralstonia nicotianae (strain ATCC BAA-1114 / GMI1000) (Ralstonia solanacearum).